The sequence spans 249 residues: Isoprenyl transferase (249 aa).

Asp29 is a catalytic residue. Position 29 (Asp29) interacts with Mg(2+). Substrate contacts are provided by residues 30-33 (GNGR), Trp34, Arg42, His46, and 74-76 (STE). The active-site Proton acceptor is Asn77. Substrate contacts are provided by residues Trp78, Arg80, Arg197, and 203 to 205 (RLS). Glu216 is a Mg(2+) binding site.

It belongs to the UPP synthase family. Homodimer. Mg(2+) serves as cofactor.

Catalyzes the condensation of isopentenyl diphosphate (IPP) with allylic pyrophosphates generating different type of terpenoids. This is Isoprenyl transferase from Trichormus variabilis (strain ATCC 29413 / PCC 7937) (Anabaena variabilis).